Here is an 877-residue protein sequence, read N- to C-terminus: Leucine--tRNA ligase (877 aa).

The short motif at 43–53 (PYPSGRIHMGH) is the 'HIGH' region element. A 'KMSKS' region motif is present at residues 628–632 (KMSKS). ATP is bound at residue K631.

It belongs to the class-I aminoacyl-tRNA synthetase family.

Its subcellular location is the cytoplasm. It catalyses the reaction tRNA(Leu) + L-leucine + ATP = L-leucyl-tRNA(Leu) + AMP + diphosphate. The protein is Leucine--tRNA ligase of Brucella anthropi (strain ATCC 49188 / DSM 6882 / CCUG 24695 / JCM 21032 / LMG 3331 / NBRC 15819 / NCTC 12168 / Alc 37) (Ochrobactrum anthropi).